A 99-amino-acid polypeptide reads, in one-letter code: Leydig cell tumor 10 kDa protein homolog (99 aa).

Positions 1–36 are disordered; the sequence is MAQGQRKFQAHKPAKSKTAAAASEKNRGPRKGGRVI.

The protein belongs to the UPF0390 family.

Functionally, may have a potential role in hypercalcemia of malignancy. This Homo sapiens (Human) protein is Leydig cell tumor 10 kDa protein homolog (C19orf53).